The chain runs to 560 residues: NAD-dependent malic enzyme (560 aa).

Residue Y100 is the Proton donor of the active site. R153 contributes to the NAD(+) binding site. K171 (proton acceptor) is an active-site residue. E242, D243, and D266 together coordinate a divalent metal cation. NAD(+) is bound by residues D266 and N413.

The protein belongs to the malic enzymes family. Homotetramer. Mg(2+) serves as cofactor. It depends on Mn(2+) as a cofactor.

It carries out the reaction (S)-malate + NAD(+) = pyruvate + CO2 + NADH. The enzyme catalyses oxaloacetate + H(+) = pyruvate + CO2. The protein is NAD-dependent malic enzyme of Psychromonas ingrahamii (strain DSM 17664 / CCUG 51855 / 37).